The following is a 156-amino-acid chain: Putative pre-16S rRNA nuclease (156 aa).

It belongs to the YqgF nuclease family.

It localises to the cytoplasm. Functionally, could be a nuclease involved in processing of the 5'-end of pre-16S rRNA. The protein is Putative pre-16S rRNA nuclease of Ehrlichia ruminantium (strain Welgevonden).